Reading from the N-terminus, the 561-residue chain is Putative transport protein DNO_0009 (561 aa).

5 helical membrane-spanning segments follow: residues 4-24 (VAIT…LGNI), 29-49 (VGLS…IMNL), 74-94 (FGLI…FFAS), 104-124 (AFAA…YYLF), and 166-186 (MGYA…MWLI). RCK C-terminal domains are found at residues 198 to 283 (LQFF…ILGE) and 285 to 369 (AGHE…LIGN). 6 helical membrane-spanning segments follow: residues 379–399 (MLPV…PIYL), 411–433 (AGGP…LYWF), 447–467 (IVLF…STLL), 472–492 (FSWI…AGII), 501–521 (YLTI…LAFA), and 538–558 (VYPL…VLLW).

Belongs to the AAE transporter (TC 2.A.81) family. YidE subfamily.

It is found in the cell membrane. This is Putative transport protein DNO_0009 from Dichelobacter nodosus (strain VCS1703A).